The primary structure comprises 318 residues: Transaldolase (318 aa).

The Schiff-base intermediate with substrate role is filled by Lys-126.

Belongs to the transaldolase family. Type 1 subfamily. In terms of assembly, homodimer.

It localises to the cytoplasm. The enzyme catalyses D-sedoheptulose 7-phosphate + D-glyceraldehyde 3-phosphate = D-erythrose 4-phosphate + beta-D-fructose 6-phosphate. The protein operates within carbohydrate degradation; pentose phosphate pathway; D-glyceraldehyde 3-phosphate and beta-D-fructose 6-phosphate from D-ribose 5-phosphate and D-xylulose 5-phosphate (non-oxidative stage): step 2/3. Its function is as follows. Transaldolase is important for the balance of metabolites in the pentose-phosphate pathway. In Cupriavidus necator (strain ATCC 17699 / DSM 428 / KCTC 22496 / NCIMB 10442 / H16 / Stanier 337) (Ralstonia eutropha), this protein is Transaldolase.